The sequence spans 590 residues: Membrane protein insertase YidC (590 aa).

Transmembrane regions (helical) follow at residues 5 to 25, 368 to 388, 433 to 453, 483 to 503, and 519 to 539; these read SVIG…FMKP, GLII…LSLA, LGGC…FYVF, LPLY…TVFF, and IMMW…PAGL.

This sequence belongs to the OXA1/ALB3/YidC family. Type 1 subfamily. In terms of assembly, interacts with the Sec translocase complex via SecD. Specifically interacts with transmembrane segments of nascent integral membrane proteins during membrane integration.

Its subcellular location is the cell inner membrane. Its function is as follows. Required for the insertion and/or proper folding and/or complex formation of integral membrane proteins into the membrane. Involved in integration of membrane proteins that insert both dependently and independently of the Sec translocase complex, as well as at least some lipoproteins. Aids folding of multispanning membrane proteins. This chain is Membrane protein insertase YidC, found in Chlorobaculum tepidum (strain ATCC 49652 / DSM 12025 / NBRC 103806 / TLS) (Chlorobium tepidum).